We begin with the raw amino-acid sequence, 469 residues long: Neuraminidase (469 aa).

Residues 1–6 (MNPNQK) lie on the Intravirion side of the membrane. A helical membrane pass occupies residues 7-27 (LFASSGIAIALGIINLLIGIS). The segment at 11-33 (SGIAIALGIINLLIGISNMSLNI) is involved in apical transport and lipid raft association. Asn28, Asn32, Asn46, Asn55, Asn56, Asn65, Asn66, and Asn85 each carry an N-linked (GlcNAc...) asparagine; by host glycan. The Virion surface segment spans residues 28 to 469 (NMSLNISLYS…PDGAQIKYFS (442 aa)). Residues 36-85 (YSKGENHKSDNLTCTNINQNNTTMVNTYINNTTIIDKNTKMENPGYLLLN) are hypervariable stalk region. Residues 88–469 (LCNVEGWVVI…PDGAQIKYFS (382 aa)) are head of neuraminidase. Cystine bridges form between Cys89-Cys417, Cys121-Cys126, Cys181-Cys228, Cys230-Cys235, Cys276-Cys289, Cys278-Cys287, Cys316-Cys334, and Cys421-Cys448. Position 115 (Arg115) interacts with substrate. N-linked (GlcNAc...) asparagine; by host glycosylation is present at Asn143. The active-site Proton donor/acceptor is the Asp148. Arg149 contacts substrate. N-linked (GlcNAc...) asparagine; by host glycans are attached at residues Asn198 and Asn232. 274 to 275 (EE) lines the substrate pocket. Arg290 contacts substrate. The Ca(2+) site is built by Asp291, Gly295, and Asp322. An N-linked (GlcNAc...) asparagine; by host glycan is attached at Asn356. A substrate-binding site is contributed by Arg369. N-linked (GlcNAc...) asparagine; by host glycosylation occurs at Asn399. Tyr403 acts as the Nucleophile in catalysis.

This sequence belongs to the glycosyl hydrolase 34 family. As to quaternary structure, homotetramer. Requires Ca(2+) as cofactor. N-glycosylated.

It is found in the virion membrane. Its subcellular location is the host apical cell membrane. The enzyme catalyses Hydrolysis of alpha-(2-&gt;3)-, alpha-(2-&gt;6)-, alpha-(2-&gt;8)- glycosidic linkages of terminal sialic acid residues in oligosaccharides, glycoproteins, glycolipids, colominic acid and synthetic substrates.. Inhibited by the neuraminidase inhibitors zanamivir (Relenza) and oseltamivir (Tamiflu). These drugs interfere with the release of progeny virus from infected cells and are effective against all influenza strains. Resistance to neuraminidase inhibitors is quite rare. Functionally, catalyzes the removal of terminal sialic acid residues from viral and cellular glycoconjugates. Cleaves off the terminal sialic acids on the glycosylated HA during virus budding to facilitate virus release. Additionally helps virus spread through the circulation by further removing sialic acids from the cell surface. These cleavages prevent self-aggregation and ensure the efficient spread of the progeny virus from cell to cell. Otherwise, infection would be limited to one round of replication. Described as a receptor-destroying enzyme because it cleaves a terminal sialic acid from the cellular receptors. May facilitate viral invasion of the upper airways by cleaving the sialic acid moieties on the mucin of the airway epithelial cells. Likely to plays a role in the budding process through its association with lipid rafts during intracellular transport. May additionally display a raft-association independent effect on budding. Plays a role in the determination of host range restriction on replication and virulence. Sialidase activity in late endosome/lysosome traffic seems to enhance virus replication. This chain is Neuraminidase, found in Influenza A virus (strain A/Equine/Prague/1/1956 H7N7).